Consider the following 426-residue polypeptide: Pyrophosphate--fructose 6-phosphate 1-phosphotransferase 1 (426 aa).

A diphosphate-binding site is contributed by Gly-15. Asp-114 contributes to the Mg(2+) binding site. Substrate is bound by residues 140-142 (TID), 186-188 (MGR), Glu-247, and 308-311 (YELR). The active-site Proton acceptor is the Asp-142.

It belongs to the phosphofructokinase type A (PFKA) family. PPi-dependent PFK group II subfamily. Clade 'Short' sub-subfamily. As to quaternary structure, homotetramer. The cofactor is Mg(2+).

The protein localises to the cytoplasm. It catalyses the reaction beta-D-fructose 6-phosphate + diphosphate = beta-D-fructose 1,6-bisphosphate + phosphate + H(+). Its pathway is carbohydrate degradation; glycolysis; D-glyceraldehyde 3-phosphate and glycerone phosphate from D-glucose: step 3/4. With respect to regulation, non-allosteric. Its function is as follows. Catalyzes the phosphorylation of D-fructose 6-phosphate, the first committing step of glycolysis. Uses inorganic phosphate (PPi) as phosphoryl donor instead of ATP like common ATP-dependent phosphofructokinases (ATP-PFKs), which renders the reaction reversible, and can thus function both in glycolysis and gluconeogenesis. Consistently, PPi-PFK can replace the enzymes of both the forward (ATP-PFK) and reverse (fructose-bisphosphatase (FBPase)) reactions. This chain is Pyrophosphate--fructose 6-phosphate 1-phosphotransferase 1 (Pfk1), found in Trichomonas vaginalis (strain ATCC PRA-98 / G3).